Reading from the N-terminus, the 489-residue chain is Cytochrome P450 302a1, mitochondrial (489 aa).

C434 provides a ligand contact to heme.

Belongs to the cytochrome P450 family. It depends on heme as a cofactor. In terms of tissue distribution, complex coexpression pattern of dib (disembodied) and sad (shade) in the early embryo that restricts to the prothoracic gland cells of the developing ring gland during late embryogenesis. In larvae and adult, coexpression is seen in prothoracic gland and follicle cells of the ovary. In adults, coexpression is seen in the follicle cells.

Its subcellular location is the mitochondrion membrane. It carries out the reaction 2,22-dideoxyecdysone + 2 reduced [adrenodoxin] + O2 + 2 H(+) = 2-deoxyecdysone + 2 oxidized [adrenodoxin] + H2O. Its pathway is steroid biosynthesis; ecdysteroid biosynthesis. In terms of biological role, required for CNS development; negatively regulates glial cell division in the embryonic midline. Involved in the metabolism of insect hormones; responsible for ecdysteroid C22-hydroxylase activity. May be involved in the breakdown of synthetic insecticides. This Drosophila melanogaster (Fruit fly) protein is Cytochrome P450 302a1, mitochondrial.